A 156-amino-acid chain; its full sequence is Ecotin (156 aa).

The N-terminal stretch at 1-19 (MKALLIAAGVAALSSTAMA) is a signal peptide. C65 and C102 are disulfide-bonded.

This sequence belongs to the protease inhibitor I11 (ecotin) family. In terms of assembly, homodimer.

The protein localises to the periplasm. Its function is as follows. General inhibitor of family S1 serine proteases. This Pseudomonas aeruginosa (strain ATCC 15692 / DSM 22644 / CIP 104116 / JCM 14847 / LMG 12228 / 1C / PRS 101 / PAO1) protein is Ecotin.